A 68-amino-acid polypeptide reads, in one-letter code: Neuronal regeneration-related protein (68 aa).

A disordered region spans residues 42–68 (EETGAASLTPPGSREFTSPATSYLHPF).

In terms of assembly, interacts with FLNA. Interacts with the latency-associated peptides (LAP) of TGFB1 and TGFB2; the interaction results in a decrease in TGFB autoinduction. In terms of processing, phosphorylated on Ser-59. Phosphorylation decreases stability and activity. In terms of tissue distribution, expressed in brain and fetal lung.

The protein localises to the cytoplasm. In terms of biological role, may have roles in cellular differentiation. Ectopic expression induces differentiation of fibroblast into myofibroblast and myofibroblast ameboid migration. Increases retinoic-acid regulation of lipid-droplet biogenesis. May also have neural functions. Promotes axonal regeneration and augments motility of gliomas. Down-regulates the expression of TGFB1 and TGFB2 but not of TGFB3. May play a role in the regulation of alveolar generation. The sequence is that of Neuronal regeneration-related protein (Nrep) from Mus musculus (Mouse).